A 441-amino-acid chain; its full sequence is MAAMGSKDGGGGGGGMAAQAGRLGVVASVAFNLAALAFYLRRRYFGGDDAAAVRKKAEAEVAPSSGKPPVTKDSIINLDHGDPTMYEAFWRGGAGERATIVIPGWQTMSYFSDVGSLCWFLEPGLEREVRRLHRLVGNAVADGYHVLVGTGSTQLFQAALYALSPPGPSAPMNVVSPAPYYSSYPAVTDFLKSGLYRWAGDAKMFDGDTYVELVCSPSNPDGGIREAVLKSGDGVAVHDLAYYWPQYTPITSAAAHDIMLFTVSKCTGHAGTRLGWALVKDRAVAQKMSKFIELNTIGVSKDSQLRAAKILKAITDGYDRAPAAGDDDDDSSRLFHFARRKMVSRWAKLRAAVAASGIFTLPDELPGHCTFANETVSAYPPFAWLRCGKEGVDDLEGYLRERKIISRGGGKFGADGRVVRISMLDTDEAFAIFVDRLAAMN.

Pyridoxal 5'-phosphate-binding positions include Tyr110, 152-153 (ST), Asn219, 239-242 (DLAY), 262-265 (TVSK), and Arg273. Lys265 is subject to N6-(pyridoxal phosphate)lysine.

The protein belongs to the alliinase family. Pyridoxal 5'-phosphate is required as a cofactor. Highly expressed in anthers. Expressed at low levels in ovaries.

It carries out the reaction L-tryptophan + 2-oxoglutarate = indole-3-pyruvate + L-glutamate. The protein operates within plant hormone metabolism; auxin biosynthesis. In terms of biological role, probable tryptophan aminotransferase that may be involved in the regulation of auxin production in developing rice grains. This chain is Tryptophan aminotransferase-related protein 1, found in Oryza sativa subsp. japonica (Rice).